The following is a 323-amino-acid chain: Quinolinate synthase (323 aa).

His37 and Ser54 together coordinate iminosuccinate. A [4Fe-4S] cluster-binding site is contributed by Cys99. Iminosuccinate is bound by residues 125–127 and Ser142; that span reads YIN. Residue Cys185 participates in [4Fe-4S] cluster binding. Iminosuccinate is bound by residues 211-213 and Thr228; that span reads HPE. Cys278 serves as a coordination point for [4Fe-4S] cluster.

The protein belongs to the quinolinate synthase family. Type 2 subfamily. Requires [4Fe-4S] cluster as cofactor.

The protein resides in the cytoplasm. The catalysed reaction is iminosuccinate + dihydroxyacetone phosphate = quinolinate + phosphate + 2 H2O + H(+). It functions in the pathway cofactor biosynthesis; NAD(+) biosynthesis; quinolinate from iminoaspartate: step 1/1. Its function is as follows. Catalyzes the condensation of iminoaspartate with dihydroxyacetone phosphate to form quinolinate. In Trichodesmium erythraeum (strain IMS101), this protein is Quinolinate synthase.